The primary structure comprises 182 residues: UPF0149 protein HI_0817 (182 aa).

The protein belongs to the UPF0149 family.

This is UPF0149 protein HI_0817 from Haemophilus influenzae (strain ATCC 51907 / DSM 11121 / KW20 / Rd).